The primary structure comprises 229 residues: 2-C-methyl-D-erythritol 4-phosphate cytidylyltransferase (229 aa).

This sequence belongs to the IspD/TarI cytidylyltransferase family. IspD subfamily.

It catalyses the reaction 2-C-methyl-D-erythritol 4-phosphate + CTP + H(+) = 4-CDP-2-C-methyl-D-erythritol + diphosphate. Its pathway is isoprenoid biosynthesis; isopentenyl diphosphate biosynthesis via DXP pathway; isopentenyl diphosphate from 1-deoxy-D-xylulose 5-phosphate: step 2/6. Functionally, catalyzes the formation of 4-diphosphocytidyl-2-C-methyl-D-erythritol from CTP and 2-C-methyl-D-erythritol 4-phosphate (MEP). This chain is 2-C-methyl-D-erythritol 4-phosphate cytidylyltransferase, found in Neisseria meningitidis serogroup A / serotype 4A (strain DSM 15465 / Z2491).